The following is a 520-amino-acid chain: tRNA-2-methylthio-N(6)-dimethylallyladenosine synthase (520 aa).

An MTTase N-terminal domain is found at 77–195; sequence KKFLIRTYGC…LPHLLRDAIF (119 aa). [4Fe-4S] cluster contacts are provided by Cys-86, Cys-122, Cys-156, Cys-232, Cys-236, and Cys-239. A Radical SAM core domain is found at 218 to 448; the sequence is RKNKTQAWVN…ALVNDISNKR (231 aa). The TRAM domain occupies 450-513; it reads LDYQDKIVEV…TWSLDGEIVS (64 aa).

Belongs to the methylthiotransferase family. MiaB subfamily. Monomer. [4Fe-4S] cluster is required as a cofactor.

Its subcellular location is the cytoplasm. The catalysed reaction is N(6)-dimethylallyladenosine(37) in tRNA + (sulfur carrier)-SH + AH2 + 2 S-adenosyl-L-methionine = 2-methylsulfanyl-N(6)-dimethylallyladenosine(37) in tRNA + (sulfur carrier)-H + 5'-deoxyadenosine + L-methionine + A + S-adenosyl-L-homocysteine + 2 H(+). Functionally, catalyzes the methylthiolation of N6-(dimethylallyl)adenosine (i(6)A), leading to the formation of 2-methylthio-N6-(dimethylallyl)adenosine (ms(2)i(6)A) at position 37 in tRNAs that read codons beginning with uridine. The polypeptide is tRNA-2-methylthio-N(6)-dimethylallyladenosine synthase (Shouchella clausii (strain KSM-K16) (Alkalihalobacillus clausii)).